Reading from the N-terminus, the 355-residue chain is Chorismate synthase (355 aa).

Residue arginine 48 participates in NADP(+) binding. FMN contacts are provided by residues 125-127, 238-239, glycine 278, 293-297, and arginine 319; these read RSS, NA, and KPASS.

Belongs to the chorismate synthase family. Homotetramer. It depends on FMNH2 as a cofactor.

It carries out the reaction 5-O-(1-carboxyvinyl)-3-phosphoshikimate = chorismate + phosphate. It functions in the pathway metabolic intermediate biosynthesis; chorismate biosynthesis; chorismate from D-erythrose 4-phosphate and phosphoenolpyruvate: step 7/7. In terms of biological role, catalyzes the anti-1,4-elimination of the C-3 phosphate and the C-6 proR hydrogen from 5-enolpyruvylshikimate-3-phosphate (EPSP) to yield chorismate, which is the branch point compound that serves as the starting substrate for the three terminal pathways of aromatic amino acid biosynthesis. This reaction introduces a second double bond into the aromatic ring system. In Baumannia cicadellinicola subsp. Homalodisca coagulata, this protein is Chorismate synthase.